The sequence spans 519 residues: 2-isopropylmalate synthase (519 aa).

Positions 12-274 (IRIFDTTLRD…DTSIHTSRIV (263 aa)) constitute a Pyruvate carboxyltransferase domain. The Mn(2+) site is built by D21, H209, H211, and N245. The tract at residues 396-519 (RLASMTISDV…MQNKQNTALA (124 aa)) is regulatory domain.

Belongs to the alpha-IPM synthase/homocitrate synthase family. LeuA type 1 subfamily. As to quaternary structure, homodimer. Requires Mn(2+) as cofactor.

It is found in the cytoplasm. The enzyme catalyses 3-methyl-2-oxobutanoate + acetyl-CoA + H2O = (2S)-2-isopropylmalate + CoA + H(+). Its pathway is amino-acid biosynthesis; L-leucine biosynthesis; L-leucine from 3-methyl-2-oxobutanoate: step 1/4. Functionally, catalyzes the condensation of the acetyl group of acetyl-CoA with 3-methyl-2-oxobutanoate (2-ketoisovalerate) to form 3-carboxy-3-hydroxy-4-methylpentanoate (2-isopropylmalate). The protein is 2-isopropylmalate synthase of Xylella fastidiosa (strain M23).